Consider the following 330-residue polypeptide: Protein rlx (330 aa).

Residues 220 to 330 (LGEDYDKGGL…EKTRGFDLEL (111 aa)) form a disordered region. Basic and acidic residues-rich tracts occupy residues 237–269 (NEQR…EWAR) and 279–330 (QNRE…DLEL).

Its function is as follows. This protein is probably required for relaxation complex formation and plasmid mobilization by conjugative plasmids. The chain is Protein rlx (rlx) from Staphylococcus aureus.